Consider the following 467-residue polypeptide: Putative odorant receptor 85e (467 aa).

The Cytoplasmic portion of the chain corresponds to 1 to 60 (MASLQFHGNVDADIRYDISLDPARESNLFRLLMGLQLANGTKPSPRLPKWWPKRLEMIGK). A helical membrane pass occupies residues 61–81 (VLPKAYCSMVIFTSLHLGVLF). Topologically, residues 82-98 (TKTTLDVLPTGELQAIT) are extracellular. The helical transmembrane segment at 99–119 (DALTMTIIYFFTGYGTIYWCL) threads the bilayer. Topologically, residues 120–159 (RSRRLLAYMEHMNREYRHHSLAGVTFVSSHAAFRMSRNFT) are cytoplasmic. The chain crosses the membrane as a helical span at residues 160–180 (VVWIMSCLLGVISWGVSPLML). Residues 181–212 (GIRMLPLQCWYPFDALGPGTYTAVYATQLFGQ) lie on the Extracellular side of the membrane. A helical transmembrane segment spans residues 213–233 (IMVGMTFGFGGSLFVTLSLLL). The Cytoplasmic segment spans residues 234-286 (LGQFDVLYCSLKNLDAHTKLLGGESVNGLSSLQEELLLGDSKRELNQYVLLQE). A helical transmembrane segment spans residues 287–307 (HPTDLLRLSAGRKCPDQGNAF). The Extracellular portion of the chain corresponds to 308–334 (HNALVECIRLHRFILHCSQELENLFSP). The chain crosses the membrane as a helical span at residues 335–355 (YCLVKSLQITFQLCLLVFVGV). Topologically, residues 356–367 (SGTREVLRIVNQ) are cytoplasmic. Residues 368-388 (LQYLGLTIFELLMFTYCGELL) form a helical membrane-spanning segment. Residues 389–467 (SRHSIRSGDA…LAAKKTESEL (79 aa)) are Extracellular-facing.

Belongs to the insect chemoreceptor superfamily. Heteromeric odorant receptor channel (TC 1.A.69) family. Or2a subfamily. As to quaternary structure, interacts with Orco. Complexes exist early in the endomembrane system in olfactory sensory neurons (OSNs), coupling these complexes to the conserved ciliary trafficking pathway. As to expression, expressed in 15% of the 120 sensory neurons within the maxillary palp.

The protein resides in the cell membrane. Functionally, odorant receptor which mediates acceptance or avoidance behavior, depending on its substrates. The odorant receptor repertoire encodes a large collection of odor stimuli that vary widely in identity, intensity, and duration. May form a complex with Orco to form odorant-sensing units, providing sensitive and prolonged odorant signaling and calcium permeability. This is Putative odorant receptor 85e (Or85e) from Drosophila melanogaster (Fruit fly).